The following is a 383-amino-acid chain: tRNA-specific 2-thiouridylase MnmA (383 aa).

ATP is bound by residues 9 to 16 and Met35; that span reads GMSGGVDS. Residues 95 to 97 form an interaction with target base in tRNA region; sequence NPD. Catalysis depends on Cys100, which acts as the Nucleophile. Residues Cys100 and Cys196 are joined by a disulfide bond. Gly124 is a binding site for ATP. Residues 146–148 are interaction with tRNA; the sequence is KDQ. The active-site Cysteine persulfide intermediate is the Cys196. An interaction with tRNA region spans residues 308 to 309; it reads RY.

It belongs to the MnmA/TRMU family.

It is found in the cytoplasm. The enzyme catalyses S-sulfanyl-L-cysteinyl-[protein] + uridine(34) in tRNA + AH2 + ATP = 2-thiouridine(34) in tRNA + L-cysteinyl-[protein] + A + AMP + diphosphate + H(+). In terms of biological role, catalyzes the 2-thiolation of uridine at the wobble position (U34) of tRNA, leading to the formation of s(2)U34. This Burkholderia pseudomallei (strain 668) protein is tRNA-specific 2-thiouridylase MnmA.